The primary structure comprises 402 residues: Oxysterol-binding protein 8 (402 aa).

The stretch at 328 to 361 forms a coiled coil; it reads DRIALEEGNLDVAAKEKHNLEEKQREDKRQRVAE.

The protein belongs to the OSBP family.

The sequence is that of Oxysterol-binding protein 8 (osbH) from Dictyostelium discoideum (Social amoeba).